The chain runs to 638 residues: Exocyst complex component EXO70A1 (638 aa).

A disordered region spans residues 163–190; that stretch reads FDGLPNSLRPSSDGDGGGKPHGGHHNDD.

Belongs to the EXO70 family. In terms of assembly, the exocyst complex is composed of SEC3, SEC5, SEC6, SEC8, SEC10, EXO70A1 and EXO84B. Interacts with SEC3A and EXO84B. Co-localizes with FPP3/VETH1, FPP2/VETH2 and COG2 in vesicle-like small motile compartments. May interact with COG2.

Its subcellular location is the cytoplasm. It localises to the cytosol. It is found in the cytoskeleton. The protein localises to the phragmoplast. The protein resides in the cell membrane. Its subcellular location is the secreted. It localises to the cell wall. Its function is as follows. Component of the exocyst complex involved in the docking of exocytic vesicles with fusion sites on the plasma membrane during regulated or polarized secretion. Involved in polarized cell growth and organ morphogenesis. Involved in polarized cell growth and organ morphogenesis. During cytokinesis, involved in cell plate initiation, cell plate maturation and formation of new primary cell wall. Participates in polarized pectin delivery required for the polarized development of the mucilage-producing volcano cells of the seed coat. Involved in the recycling and localization of auxin efflux carriers PIN1 and PIN2, and thus in polar auxin transport regulation. Functions in vesicle trafficking in tracheary elements to regulate patterned secondary cell wall (SCW) thickening. In Arabidopsis thaliana (Mouse-ear cress), this protein is Exocyst complex component EXO70A1.